A 407-amino-acid polypeptide reads, in one-letter code: MKRVYIMVLDSFGIGSSADAERFGDVGSDTLGHIAQACAAGTADKGRSGSLHLPNLSRLGLGKAAEASTGTFPAGLDENADIIGAYAHASEISSGKDTPSGHWEIAGVPVLFDWGYFKDEENSFPQELLDKLVKRANLPGYLGNCHSSGTVILDQLAEEHMKTGKPIFYTSADSVFQIACHEETFGLDKLYELCEIAREELTEGDYNIGRVIARPFIGDKPGNFERTGNRHDLAVEPPAPTILKKLVDEKGGEVVSVGKIADIYAQVGITKKVKATGIDALFDATLKEMDSAGDNTIVFTNFVDFDSAYGHRRDIPGYAAALELFDRRLPELMSRVTGDDILILTADHGCDPSWHGTDHTRENVPVLIYGPKVKPGSYGHRETFADIGQTVAAYFGLSPMDYGKSIL.

Mn(2+) is bound by residues Asp-10, Asp-306, His-311, Asp-347, His-348, and His-359.

This sequence belongs to the phosphopentomutase family. Mn(2+) serves as cofactor.

It localises to the cytoplasm. It catalyses the reaction 2-deoxy-alpha-D-ribose 1-phosphate = 2-deoxy-D-ribose 5-phosphate. The enzyme catalyses alpha-D-ribose 1-phosphate = D-ribose 5-phosphate. It participates in carbohydrate degradation; 2-deoxy-D-ribose 1-phosphate degradation; D-glyceraldehyde 3-phosphate and acetaldehyde from 2-deoxy-alpha-D-ribose 1-phosphate: step 1/2. In terms of biological role, isomerase that catalyzes the conversion of deoxy-ribose 1-phosphate (dRib-1-P) and ribose 1-phosphate (Rib-1-P) to deoxy-ribose 5-phosphate (dRib-5-P) and ribose 5-phosphate (Rib-5-P), respectively. The sequence is that of Phosphopentomutase from Pectobacterium atrosepticum (strain SCRI 1043 / ATCC BAA-672) (Erwinia carotovora subsp. atroseptica).